The primary structure comprises 239 residues: Phosphoribosylaminoimidazole-succinocarboxamide synthase (239 aa).

This sequence belongs to the SAICAR synthetase family.

It catalyses the reaction 5-amino-1-(5-phospho-D-ribosyl)imidazole-4-carboxylate + L-aspartate + ATP = (2S)-2-[5-amino-1-(5-phospho-beta-D-ribosyl)imidazole-4-carboxamido]succinate + ADP + phosphate + 2 H(+). It functions in the pathway purine metabolism; IMP biosynthesis via de novo pathway; 5-amino-1-(5-phospho-D-ribosyl)imidazole-4-carboxamide from 5-amino-1-(5-phospho-D-ribosyl)imidazole-4-carboxylate: step 1/2. The polypeptide is Phosphoribosylaminoimidazole-succinocarboxamide synthase (Psychrobacter sp. (strain PRwf-1)).